The primary structure comprises 530 residues: MADDIDIEAMLEAPYKKDENKLNSANGHEERSKKRKKSKSRSRSHERKRSKSKERKRSRDRERKKSKSRERKRSRSKERRRSRSRSRDRRFRGRYRSPYSGPKFNSAIRGKIGLPHSIKLSRRRSRSKSPFRKDKSPVREPIDNLTPEERDARTVFCMQLAARIRPRDLEEFFSTVGKVRDVRMISDRNSRRSKGIAYVEFVDVSSVPLAIGLTGQRVLGVPIIVQASQAEKNRAAAMANNLQKGSAGPMRLYVGSLHFNITEDMLRGIFEPFGRIESIQLMMDSETGRSKGYGFITFSDSECAKKALEQLNGFELAGRPMKVGHVTERTDASSASSFLDSDELERTGIDLGTTGRLQLMARLAEGTGLQIPPAAQQALQMSGSLAFGAVAEFSFVIDLQTRLSQQTEASALAAAASVQPLATQCFQLSNMFNPQTEEEVGWDTEIKDDVIEECNKHGGVIHIYVDKNSAQGNVYVKCPSIAAAIAAVNALHGRWFAGKMITAAYVPLPTYHNLFPDSMTATQLLVPSRR.

Residues Met-1–Thr-146 form a disordered region. At Ala-2 the chain carries N-acetylalanine. Residues Pro-14–Ser-32 are compositionally biased toward basic and acidic residues. Basic residues-rich tracts occupy residues Lys-33–Lys-56 and Lys-64–Tyr-95. Tyr-95 is modified (phosphotyrosine). 2 positions are modified to phosphoserine: Ser-97 and Ser-100. Lys-111 is covalently cross-linked (Glycyl lysine isopeptide (Lys-Gly) (interchain with G-Cter in SUMO2)). Position 117 is a phosphoserine (Ser-117). A Glycyl lysine isopeptide (Lys-Gly) (interchain with G-Cter in SUMO2) cross-link involves residue Lys-119. Positions Lys-119 to Pro-130 are enriched in basic residues. Ser-121 and Ser-136 each carry phosphoserine. Residues Phe-131–Thr-146 are compositionally biased toward basic and acidic residues. Thr-146 carries the post-translational modification Phosphothreonine. Residues Arg-153–Ala-230 enclose the RRM 1 domain. Lys-244 is covalently cross-linked (Glycyl lysine isopeptide (Lys-Gly) (interchain with G-Cter in SUMO2)). In terms of domain architecture, RRM 2 spans Met-250–Glu-328. Residues Lys-291–Gly-355 are activating domain. The tract at residues Lys-291–Gln-406 is interaction with JUN. A phosphoserine mark is found at Ser-334, Ser-337, and Ser-341. Residues Gly-355–Gln-406 are interaction with ESR1 and ESR2. Positions Gln-406–Arg-530 are interaction with NCOA6. Residues Glu-445–Leu-508 form the RRM 3 domain.

Belongs to the splicing factor SR family. As to quaternary structure, interacts with NCOA6 and JUN. Interacts with ESR1 and ESR2, in the presence of estradiol (E2). Interacts with RSRC1 (via Arg/Ser-rich domain). Interacts with SF3B1. Interacts with ZNF106 (via N-terminus).

The protein localises to the nucleus. RNA-binding protein that acts as a pre-mRNA splicing factor. Acts by promoting exon inclusion via regulation of exon cassette splicing. Also acts as a transcriptional coactivator for steroid nuclear receptors ESR1/ER-alpha and ESR2/ER-beta, and JUN/AP-1, independently of the pre-mRNA splicing factor activity. This Mus musculus (Mouse) protein is RNA-binding protein 39 (Rbm39).